A 427-amino-acid chain; its full sequence is Serine--tRNA ligase (427 aa).

232 to 234 (TAE) contributes to the L-serine binding site. 263 to 265 (RSE) is an ATP binding site. L-serine is bound at residue Glu286. 350–353 (EISS) provides a ligand contact to ATP. Ser385 provides a ligand contact to L-serine.

It belongs to the class-II aminoacyl-tRNA synthetase family. Type-1 seryl-tRNA synthetase subfamily. As to quaternary structure, homodimer. The tRNA molecule binds across the dimer.

Its subcellular location is the cytoplasm. It catalyses the reaction tRNA(Ser) + L-serine + ATP = L-seryl-tRNA(Ser) + AMP + diphosphate + H(+). It carries out the reaction tRNA(Sec) + L-serine + ATP = L-seryl-tRNA(Sec) + AMP + diphosphate + H(+). The protein operates within aminoacyl-tRNA biosynthesis; selenocysteinyl-tRNA(Sec) biosynthesis; L-seryl-tRNA(Sec) from L-serine and tRNA(Sec): step 1/1. In terms of biological role, catalyzes the attachment of serine to tRNA(Ser). Is also able to aminoacylate tRNA(Sec) with serine, to form the misacylated tRNA L-seryl-tRNA(Sec), which will be further converted into selenocysteinyl-tRNA(Sec). The protein is Serine--tRNA ligase of Aromatoleum aromaticum (strain DSM 19018 / LMG 30748 / EbN1) (Azoarcus sp. (strain EbN1)).